The sequence spans 205 residues: ATP phosphoribosyltransferase (205 aa).

This sequence belongs to the ATP phosphoribosyltransferase family. Short subfamily. Heteromultimer composed of HisG and HisZ subunits.

The protein localises to the cytoplasm. It carries out the reaction 1-(5-phospho-beta-D-ribosyl)-ATP + diphosphate = 5-phospho-alpha-D-ribose 1-diphosphate + ATP. The protein operates within amino-acid biosynthesis; L-histidine biosynthesis; L-histidine from 5-phospho-alpha-D-ribose 1-diphosphate: step 1/9. Functionally, catalyzes the condensation of ATP and 5-phosphoribose 1-diphosphate to form N'-(5'-phosphoribosyl)-ATP (PR-ATP). Has a crucial role in the pathway because the rate of histidine biosynthesis seems to be controlled primarily by regulation of HisG enzymatic activity. This is ATP phosphoribosyltransferase from Staphylococcus carnosus (strain TM300).